A 684-amino-acid chain; its full sequence is Beta-taxilin (684 aa).

The segment covering 1-26 has biased composition (polar residues); that stretch reads MEANHSEQLSAERQSTPPGDSSSLPS. The tract at residues 1–132 is disordered; it reads MEANHSEQLS…KEPVSNKEQK (132 aa). Positions 45–64 are enriched in basic and acidic residues; the sequence is PEKEASVHPDISEELNRQLE. The segment covering 93-107 has biased composition (acidic residues); it reads ESPDNEDGDCEETTE. Coiled coils occupy residues 135-351 and 378-467; these read KKIL…VLKE and NEVF…SEKD. Residues 458–475 are compositionally biased toward basic and acidic residues; that stretch reads IRDAEISEKDDQSQHNSD. Disordered stretches follow at residues 458-485, 514-632, and 646-684; these read IRDA…VSVD, ESTP…DVPA, and PACE…EGVD. 2 positions are modified to phosphoserine: serine 474 and serine 483. The span at 514–524 shows a compositional bias: basic and acidic residues; sequence ESTPHQSKETQ. Residues 613–622 show a composition bias toward polar residues; that stretch reads QAPQAPTEAS.

This sequence belongs to the taxilin family. Binds to the C-terminal coiled coil region of syntaxin family members STX1A, STX3A and STX4A. Has a preference for STX1A. Expressed in skeletal muscle.

Promotes motor nerve regeneration. May be involved in intracellular vesicle traffic. The sequence is that of Beta-taxilin (TXLNB) from Homo sapiens (Human).